A 175-amino-acid chain; its full sequence is UPF0398 protein SGO_0588 (175 aa).

This sequence belongs to the UPF0398 family.

In Streptococcus gordonii (strain Challis / ATCC 35105 / BCRC 15272 / CH1 / DL1 / V288), this protein is UPF0398 protein SGO_0588.